The following is a 152-amino-acid chain: SsrA-binding protein (152 aa).

The protein belongs to the SmpB family.

It localises to the cytoplasm. Required for rescue of stalled ribosomes mediated by trans-translation. Binds to transfer-messenger RNA (tmRNA), required for stable association of tmRNA with ribosomes. tmRNA and SmpB together mimic tRNA shape, replacing the anticodon stem-loop with SmpB. tmRNA is encoded by the ssrA gene; the 2 termini fold to resemble tRNA(Ala) and it encodes a 'tag peptide', a short internal open reading frame. During trans-translation Ala-aminoacylated tmRNA acts like a tRNA, entering the A-site of stalled ribosomes, displacing the stalled mRNA. The ribosome then switches to translate the ORF on the tmRNA; the nascent peptide is terminated with the 'tag peptide' encoded by the tmRNA and targeted for degradation. The ribosome is freed to recommence translation, which seems to be the essential function of trans-translation. The protein is SsrA-binding protein of Rickettsia rickettsii.